We begin with the raw amino-acid sequence, 203 residues long: MVRVKICGITSLEDALVAVEAGADALGFVFHDESPRHVTPEQAAGIIAGLPPFIQTVGLFVNRPPAFVNDTATRCRLDLVQLHGDEPPEFCDAVERRVIKAFRVKDISSLDPIRHYRVAAHLLDAYSPKAYGGTGLTFNWDIAAAAKAFGPLILAGGLTPDNVREAVETVKPYAVDVSGGVESAPGRKDAARVREFIRRAKGW.

The protein belongs to the TrpF family.

It catalyses the reaction N-(5-phospho-beta-D-ribosyl)anthranilate = 1-(2-carboxyphenylamino)-1-deoxy-D-ribulose 5-phosphate. It functions in the pathway amino-acid biosynthesis; L-tryptophan biosynthesis; L-tryptophan from chorismate: step 3/5. This chain is N-(5'-phosphoribosyl)anthranilate isomerase, found in Geobacter sulfurreducens (strain ATCC 51573 / DSM 12127 / PCA).